Consider the following 283-residue polypeptide: Elongation factor Ts (283 aa).

Residues Thr-79 to Val-82 are involved in Mg(2+) ion dislocation from EF-Tu.

The protein belongs to the EF-Ts family.

The protein localises to the cytoplasm. Functionally, associates with the EF-Tu.GDP complex and induces the exchange of GDP to GTP. It remains bound to the aminoacyl-tRNA.EF-Tu.GTP complex up to the GTP hydrolysis stage on the ribosome. This Shewanella putrefaciens (strain CN-32 / ATCC BAA-453) protein is Elongation factor Ts.